The chain runs to 562 residues: Arf-GAP domain and FG repeat-containing protein 1 (562 aa).

Positions 11–135 (EKHLKMLRDM…WYVPPEQAKV (125 aa)) constitute an Arf-GAP domain. A C4-type zinc finger spans residues 29–52 (CFDCDQRGPTYVNMTVGSFVCTSC). Residues 145-193 (GSSASSTSSTPEVKPLKSLLGDSAPTLHLNKGTPSQSPVVGRSQGQQQE) form a disordered region. Ser167 bears the Phosphoserine mark. Over residues 176–191 (GTPSQSPVVGRSQGQQ) the composition is skewed to polar residues. The residue at position 177 (Thr177) is a Phosphothreonine. 2 positions are modified to phosphoserine: Ser181 and Ser362. Residue Ser367 is glycosylated (O-linked (GlcNAc) serine).

Interacts with EPS15R and EPS15. Interacts with FCHO1. In terms of processing, O-glycosylated. Ubiquitously expressed.

Its subcellular location is the nucleus. It localises to the cytoplasmic vesicle. Required for vesicle docking or fusion during acrosome biogenesis. May play a role in RNA trafficking or localization. In case of infection by HIV-1, acts as a cofactor for viral Rev and promotes movement of Rev-responsive element-containing RNAs from the nuclear periphery to the cytoplasm. This step is essential for HIV-1 replication. This chain is Arf-GAP domain and FG repeat-containing protein 1 (AGFG1), found in Homo sapiens (Human).